A 378-amino-acid chain; its full sequence is GTPase Obg (378 aa).

The region spanning 1–159 (MKFVDEATIE…RRLRLELKVL (159 aa)) is the Obg domain. Residues 160–336 (ADVGLLGLPN…LIWALQDYLD (177 aa)) form the OBG-type G domain. GTP is bound by residues 166–173 (GLPNAGKS), 191–195 (FTTLH), 213–216 (DIPG), 288–291 (NKLD), and 317–319 (SGL). Residues S173 and T193 each contribute to the Mg(2+) site. Residues 345-378 (AQDQADGTYVAEDPRFDATRSDAAPPGAPRGGDE) form a disordered region.

This sequence belongs to the TRAFAC class OBG-HflX-like GTPase superfamily. OBG GTPase family. In terms of assembly, monomer. The cofactor is Mg(2+).

The protein localises to the cytoplasm. Its function is as follows. An essential GTPase which binds GTP, GDP and possibly (p)ppGpp with moderate affinity, with high nucleotide exchange rates and a fairly low GTP hydrolysis rate. Plays a role in control of the cell cycle, stress response, ribosome biogenesis and in those bacteria that undergo differentiation, in morphogenesis control. The polypeptide is GTPase Obg (Bordetella petrii (strain ATCC BAA-461 / DSM 12804 / CCUG 43448)).